The sequence spans 202 residues: MVSIHNSFILLMLMISICFCEKCLTNEECDLKWPDAICVRGRCRCSENTIRKKSASREWVCLATNDATGNSGPPLTCPTPEGAGYQVMYRKDGEPVKCSSKKKPDTCPEGFECIQGLSILGALDGVCCPDRAKTCVHPIFDHPDDGYLSRWGFDGEQCIEFKWNPERPSSANNFKTRAHCEDYCIGSINGITNYHQSNFHLF.

An N-terminal signal peptide occupies residues 1 to 20 (MVSIHNSFILLMLMISICFC). In terms of domain architecture, BPTI/Kunitz inhibitor spans 135-184 (CVHPIFDHPDDGYLSRWGFDGEQCIEFKWNPERPSSANNFKTRAHCEDYC). 2 cysteine pairs are disulfide-bonded: Cys-135/Cys-184 and Cys-158/Cys-180.

As to expression, expressed in larval and adult hypodermis, hermaphrodite vulva and adult excretory cell and duct.

Its function is as follows. Appears to lack serine protease inhibitor activity in vitro when tested with bovine pancreatic alpha-chymotrypsin and elastase. Involved in cuticle biosynthesis. The chain is Kunitz-type protein bli-5 from Caenorhabditis elegans.